The sequence spans 224 residues: Synaptogyrin-2 (224 aa).

The residue at position 1 (M1) is an N-acetylmethionine. The residue at position 3 (S3) is a Phosphoserine. Positions 20–171 (FLKQPQVVVR…LAFLAYQRYK (152 aa)) constitute an MARVEL domain. A run of 4 helical transmembrane segments spans residues 26–46 (VVVR…IFGE), 73–93 (AIGV…IYFP), 105–125 (VIGD…GFCF), and 147–167 (AAIT…FLAY). The segment at 196–224 (PGVPADTYQQPPFTQNAESTEGYQPPPVY) is disordered. A compositionally biased stretch (polar residues) spans 202–217 (TYQQPPFTQNAESTEG).

It belongs to the synaptogyrin family. May be tyrosine phosphorylated by Src.

Its subcellular location is the cytoplasmic vesicle membrane. The protein localises to the cytoplasmic vesicle. It localises to the secretory vesicle. The protein resides in the synaptic vesicle membrane. Functionally, may play a role in regulated exocytosis. In neuronal cells, modulates the localization of synaptophysin/SYP into synaptic-like microvesicles and may therefore play a role in the formation and/or the maturation of this vesicles. May also play a role in GLUT4 storage and transport to the plasma membrane. The protein is Synaptogyrin-2 of Bos taurus (Bovine).